The sequence spans 132 residues: Putative F-box protein At4g05620 (132 aa).

The 47-residue stretch at 17 to 63 folds into the F-box domain; the sequence is QKKSLSLPHDVLVSCLAHVSRLHYSILSLVLKNFRSLIASPELYKTR.

The chain is Putative F-box protein At4g05620 from Arabidopsis thaliana (Mouse-ear cress).